The primary structure comprises 159 residues: ATP synthase subunit b (159 aa).

The chain crosses the membrane as a helical span at residues 2–22 (NISIPQIIAAILNFIILLLIV).

It belongs to the ATPase B chain family. As to quaternary structure, F-type ATPases have 2 components, F(1) - the catalytic core - and F(0) - the membrane proton channel. F(1) has five subunits: alpha(3), beta(3), gamma(1), delta(1), epsilon(1). F(0) has three main subunits: a(1), b(2) and c(10-14). The alpha and beta chains form an alternating ring which encloses part of the gamma chain. F(1) is attached to F(0) by a central stalk formed by the gamma and epsilon chains, while a peripheral stalk is formed by the delta and b chains.

Its subcellular location is the cell membrane. Its function is as follows. F(1)F(0) ATP synthase produces ATP from ADP in the presence of a proton or sodium gradient. F-type ATPases consist of two structural domains, F(1) containing the extramembraneous catalytic core and F(0) containing the membrane proton channel, linked together by a central stalk and a peripheral stalk. During catalysis, ATP synthesis in the catalytic domain of F(1) is coupled via a rotary mechanism of the central stalk subunits to proton translocation. In terms of biological role, component of the F(0) channel, it forms part of the peripheral stalk, linking F(1) to F(0). The protein is ATP synthase subunit b of Clostridium botulinum (strain Okra / Type B1).